Here is a 280-residue protein sequence, read N- to C-terminus: Large ribosomal subunit protein uL2 (280 aa).

Residues 213–280 are disordered; sequence RWKGKRPSVR…RRRTGKKHAR (68 aa). Over residues 268–280 the composition is skewed to basic residues; that stretch reads IVRRRRTGKKHAR.

The protein belongs to the universal ribosomal protein uL2 family. In terms of assembly, part of the 50S ribosomal subunit. Forms a bridge to the 30S subunit in the 70S ribosome.

One of the primary rRNA binding proteins. Required for association of the 30S and 50S subunits to form the 70S ribosome, for tRNA binding and peptide bond formation. It has been suggested to have peptidyltransferase activity; this is somewhat controversial. Makes several contacts with the 16S rRNA in the 70S ribosome. The sequence is that of Large ribosomal subunit protein uL2 from Mycobacterium leprae (strain Br4923).